Here is a 446-residue protein sequence, read N- to C-terminus: Tubulin beta-1 chain (446 aa).

Residues glutamine 11, glutamate 69, serine 138, glycine 142, threonine 143, glycine 144, asparagine 204, and asparagine 226 each coordinate GTP. A Mg(2+)-binding site is contributed by glutamate 69.

The protein belongs to the tubulin family. As to quaternary structure, dimer of alpha and beta chains. A typical microtubule is a hollow water-filled tube with an outer diameter of 25 nm and an inner diameter of 15 nM. Alpha-beta heterodimers associate head-to-tail to form protofilaments running lengthwise along the microtubule wall with the beta-tubulin subunit facing the microtubule plus end conferring a structural polarity. Microtubules usually have 13 protofilaments but different protofilament numbers can be found in some organisms and specialized cells. Mg(2+) is required as a cofactor.

It is found in the cytoplasm. The protein localises to the cytoskeleton. Functionally, tubulin is the major constituent of microtubules, a cylinder consisting of laterally associated linear protofilaments composed of alpha- and beta-tubulin heterodimers. Microtubules grow by the addition of GTP-tubulin dimers to the microtubule end, where a stabilizing cap forms. Below the cap, tubulin dimers are in GDP-bound state, owing to GTPase activity of alpha-tubulin. This chain is Tubulin beta-1 chain (TUBB1), found in Suillus bovinus (Jersey cow bolete).